Reading from the N-terminus, the 823-residue chain is Transcription factor SPT20 homolog-like 1 (823 aa).

5 disordered regions span residues 246–273, 369–524, 560–601, 631–669, and 720–757; these read SVKP…KEER, PRKK…AAQP, GSSF…AVQA, VLTG…LGLS, and LRQQ…PQHI. The span at 423-440 shows a compositional bias: polar residues; sequence SHSSSGPASVSQLSSWKT. Low complexity-rich tracts occupy residues 469–509, 568–582, and 636–650; these read SSSG…QKPS, APGS…ISGS, and QQQS…QLQQ.

This sequence belongs to the SPT20 family.

The sequence is that of Transcription factor SPT20 homolog-like 1 (SUPT20HL1) from Homo sapiens (Human).